The following is a 1257-amino-acid chain: Bifunctional autolysin (1257 aa).

Residues 1–29 (MAKKFNYKLPSMVALTLVGSAVTAHQVQA) form the signal peptide. Residues 99-137 (QVNGDTRATQSTTSNNAKPVTKSTNTTAPKTNNNVTSAG) show a composition bias toward polar residues. Disordered stretches follow at residues 99 to 150 (QVNG…NSEN), 173 to 217 (AAPK…KYKP), and 417 to 441 (TQSTTTPTTPSKPSTPSKPSTPSTG). Low complexity-rich tracts occupy residues 173–208 (AAPKATPVAPKAKTEATPKVTTFSASAQPRSAAAAP) and 419–440 (STTTPTTPSKPSTPSKPSTPST). Residues 197-776 (ASAQPRSAAA…AVAQPKTAVK (580 aa)) are N-acetylmuramoyl-L-alanine amidase. GW domains follow at residues 444-518 (TVAA…YNTA), 520-594 (SPVN…DTAK), 613-687 (TVSS…YNNA), 689-763 (SPVN…VPAA), 785-860 (TTQT…VQNL), 862-937 (KEVK…APTA), and 944-1018 (AAKD…KELI). The endo-beta-N-acetylglucosaminidase stretch occupies residues 777-1257 (AYAVTKPQTT…GKYFDIPQYK (481 aa)).

This sequence in the N-terminal section; belongs to the N-acetylmuramoyl-L-alanine amidase 2 family. The protein in the C-terminal section; belongs to the glycosyl hydrolase 73 family. In terms of assembly, oligomer; forms a ring structure at the cell surface which is important for efficient partitioning of daughter cells after cell division. Undergoes proteolytic processing to generate the two extracellular lytic enzymes, probably at the septal region on the cell surface.

Its subcellular location is the secreted. It carries out the reaction Hydrolyzes the link between N-acetylmuramoyl residues and L-amino acid residues in certain cell-wall glycopeptides.. It catalyses the reaction an N(4)-(oligosaccharide-(1-&gt;3)-[oligosaccharide-(1-&gt;6)]-beta-D-Man-(1-&gt;4)-beta-D-GlcNAc-(1-&gt;4)-alpha-D-GlcNAc)-L-asparaginyl-[protein] + H2O = an oligosaccharide-(1-&gt;3)-[oligosaccharide-(1-&gt;6)]-beta-D-Man-(1-&gt;4)-D-GlcNAc + N(4)-(N-acetyl-beta-D-glucosaminyl)-L-asparaginyl-[protein]. Its function is as follows. Endohydrolysis of the di-N-acetylchitobiosyl unit in high-mannose glycopeptides and glycoproteins containing the -[(Man)5(GlcNAc)2]-Asn structure. One N-acetyl-D-glucosamine residue remains attached to the protein; the rest of the oligosaccharide is released intact. Cleaves the peptidoglycan connecting the daughter cells at the end of the cell division cycle, resulting in the separation of the two newly divided cells. Acts as an autolysin in penicillin-induced lysis. This chain is Bifunctional autolysin (atl), found in Staphylococcus aureus (strain MRSA252).